Reading from the N-terminus, the 612-residue chain is Elongation factor 4 (612 aa).

The tr-type G domain occupies 11–193; sequence KHIRNFSIVA…EIVKKVPAPD (183 aa). Residues 23–28 and 140–143 contribute to the GTP site; these read DHGKST and NKID.

Belongs to the TRAFAC class translation factor GTPase superfamily. Classic translation factor GTPase family. LepA subfamily.

It is found in the cell membrane. The catalysed reaction is GTP + H2O = GDP + phosphate + H(+). Required for accurate and efficient protein synthesis under certain stress conditions. May act as a fidelity factor of the translation reaction, by catalyzing a one-codon backward translocation of tRNAs on improperly translocated ribosomes. Back-translocation proceeds from a post-translocation (POST) complex to a pre-translocation (PRE) complex, thus giving elongation factor G a second chance to translocate the tRNAs correctly. Binds to ribosomes in a GTP-dependent manner. The protein is Elongation factor 4 of Lactobacillus johnsonii (strain CNCM I-12250 / La1 / NCC 533).